The primary structure comprises 127 residues: Large ribosomal subunit protein bL17 (127 aa).

The protein belongs to the bacterial ribosomal protein bL17 family. Part of the 50S ribosomal subunit. Contacts protein L32.

The polypeptide is Large ribosomal subunit protein bL17 (Pelobacter propionicus (strain DSM 2379 / NBRC 103807 / OttBd1)).